We begin with the raw amino-acid sequence, 89 residues long: Protein PerC (89 aa).

Its function is as follows. Transcriptional activator of eaeA/bfpA expression in enteropathogenic E.coli. This Escherichia coli O111:H- protein is Protein PerC (perC).